We begin with the raw amino-acid sequence, 846 residues long: Structure-specific endonuclease subunit SLX4 (846 aa).

Disordered stretches follow at residues 1–20 (MTDH…VGSA), 84–111 (KAGA…AESM), 123–164 (QPAE…VKKA), 283–322 (RTSK…SKIT), 480–513 (DPTP…SSLL), 624–690 (PPNA…MGSQ), and 723–751 (TLAS…QTRA). The span at 141-153 (KPSEKGQKSEKTA) shows a compositional bias: basic and acidic residues. Polar residues predominate over residues 293 to 303 (LDTGTSSTSEG). Residues 306–318 (KRKQTKKAKRSAK) are compositionally biased toward basic residues. 2 stretches are compositionally biased toward polar residues: residues 657–680 (KEIT…SKPT) and 725–751 (ASRS…QTRA).

The protein belongs to the SLX4 family. Forms a heterodimer with SLX1. Phosphorylated in response to DNA damage.

The protein localises to the nucleus. Functionally, regulatory subunit of the SLX1-SLX4 structure-specific endonuclease that resolves DNA secondary structures generated during DNA repair and recombination. Has endonuclease activity towards branched DNA substrates, introducing single-strand cuts in duplex DNA close to junctions with ss-DNA. The sequence is that of Structure-specific endonuclease subunit SLX4 from Arthroderma otae (strain ATCC MYA-4605 / CBS 113480) (Microsporum canis).